A 194-amino-acid polypeptide reads, in one-letter code: Early E3 22.1 kDa glycoprotein (194 aa).

6 N-linked (GlcNAc...) asparagine; by host glycosylation sites follow: asparagine 19, asparagine 60, asparagine 75, asparagine 87, asparagine 125, and asparagine 138.

The chain is Early E3 22.1 kDa glycoprotein from Canine adenovirus serotype 1 (strain RI261) (CAdV-1).